Reading from the N-terminus, the 354-residue chain is Serum paraoxonase/lactonase 3 (354 aa).

Residues C42 and C352 are joined by a disulfide bond. Residue N50 is glycosylated (N-linked (GlcNAc...) asparagine). Ca(2+) contacts are provided by E53 and D54. H114 serves as the catalytic Proton acceptor. I116 lines the Ca(2+) pocket. The residue at position 165 (S165) is a Phosphoserine. Ca(2+) contacts are provided by N167, D168, N223, D268, and N269. N269 and N323 each carry an N-linked (GlcNAc...) asparagine glycan.

It belongs to the paraoxonase family. In terms of assembly, homodimer. Ca(2+) serves as cofactor. Post-translationally, glycosylated. In terms of processing, the signal sequence is not cleaved.

The protein resides in the secreted. It is found in the extracellular space. The enzyme catalyses a phenyl acetate + H2O = a phenol + acetate + H(+). It carries out the reaction An aryl dialkyl phosphate + H2O = dialkyl phosphate + an aryl alcohol.. It catalyses the reaction an N-acyl-L-homoserine lactone + H2O = an N-acyl-L-homoserine + H(+). In terms of biological role, has low activity towards the organophosphate paraxon and aromatic carboxylic acid esters. Rapidly hydrolyzes lactones such as statin prodrugs (e.g. lovastatin). Hydrolyzes aromatic lactones and 5- or 6-member ring lactones with aliphatic substituents but not simple lactones or those with polar substituents. The polypeptide is Serum paraoxonase/lactonase 3 (Pon3) (Mus musculus (Mouse)).